We begin with the raw amino-acid sequence, 718 residues long: Sodium/myo-inositol cotransporter (718 aa).

The Extracellular portion of the chain corresponds to 1-9 (MRAVLETAD). The chain crosses the membrane as a helical span at residues 10 to 29 (IAIVALYFILVMCIGFFAMW). Residues 30–38 (KSNRSTVSG) are Cytoplasmic-facing. The helical transmembrane segment at 39–57 (YFLAGRSMTWVAIGASLFV) threads the bilayer. The Extracellular segment spans residues 58 to 86 (SNIGSEHFIGLAGSGAASGFAVGAWEFNA). Residues 87 to 110 (LLLLQLLGWVFIPIYIRSGVYTMP) form a helical membrane-spanning segment. Residues 111–123 (EYLSKRFGGHRIQ) are Cytoplasmic-facing. The chain crosses the membrane as a helical span at residues 124 to 144 (VYFAALSLILYIFTKLSVDLY). The Extracellular portion of the chain corresponds to 145 to 157 (SGALFIQESLGWN). The chain crosses the membrane as a helical span at residues 158-183 (LYVSVILLIGMTALLTVTGGLVAVIY). Residues 184-186 (TDT) lie on the Cytoplasmic side of the membrane. Residues 187-205 (LQALLMIVGALTLMIISMM) form a helical membrane-spanning segment. The Extracellular segment spans residues 206–303 (EIGGFEEVKR…HAKGSTLMAG (98 aa)). N232 carries an N-linked (GlcNAc...) asparagine glycan. The helical transmembrane segment at 304-324 (FLKLLPMFIIVVPGMISRILF) threads the bilayer. Residues 325-353 (ADDIACINPEHCMQVCGSRAGCSNIAYPR) lie on the Cytoplasmic side of the membrane. A helical transmembrane segment spans residues 354–376 (LVMKLVPVGLRGLMMAVMIAALM). Residues 377 to 406 (SDLDSIFNSASTIFTLDVYKLIRRSASSRE) lie on the Extracellular side of the membrane. Residues 407–430 (LMIVGRIFVAFMVVISIAWVPIIV) form a helical membrane-spanning segment. The Cytoplasmic portion of the chain corresponds to 431–443 (EMQGGQMYLYIQE). Residues 444-462 (VADYLTPPVAALFLLAIFW) form a helical membrane-spanning segment. At 463–510 (KRCNEQGAFYGGMAGFVLGAVRLTLAFAYRAPECDQPDNRPGFIKDIH) the chain is on the extracellular side. A helical membrane pass occupies residues 511–532 (YMYVATALFWVTGLITVIVSLL). Residues 533-695 (TPPPTKEQIR…QMLEEPPQVK (163 aa)) lie on the Cytoplasmic side of the membrane. 2 positions are modified to phosphoserine: S594 and S632. Residues 696-716 (LILNIGLFAVCSLGIFMFVYF) form a helical membrane-spanning segment. The Extracellular segment spans residues 717 to 718 (SL).

It belongs to the sodium:solute symporter (SSF) (TC 2.A.21) family. In terms of assembly, interacts with KCNQ2 (via the pore module). Interacts with KCNQ1; this interaction is direct. Forms coregulatory complexes with ion channels KCNQ2-KCNQ3 and KCNQ1-KCNE2. Kidney cortex and medulla.

It localises to the apical cell membrane. The protein localises to the basolateral cell membrane. The catalysed reaction is myo-inositol(out) + 2 Na(+)(out) = myo-inositol(in) + 2 Na(+)(in). The enzyme catalyses scyllo-inositol(out) + 2 Na(+)(out) = scyllo-inositol(in) + 2 Na(+)(in). Its activity is regulated as follows. Inhibited by phlorizin and phloretin. Electrogenic Na(+)-coupled sugar symporter that actively transports myo-inositol and its stereoisomer scyllo-inositol across the plasma membrane, with a Na(+) to sugar coupling ratio of 2:1. Maintains myo-inositol concentration gradient that defines cell volume and fluid balance during osmotic stress, in particular in the fetoplacental unit and central nervous system. Forms coregulatory complexes with voltage-gated K(+) ion channels, allosterically altering ion selectivity, voltage dependence and gating kinetics of the channel. In turn, K(+) efflux through the channel forms a local electrical gradient that modulates electrogenic Na(+)-coupled myo-inositol influx through the transporter. Associates with KCNQ1-KCNE2 channel in the apical membrane of choroid plexus epithelium and regulates the myo-inositol gradient between blood and cerebrospinal fluid with an impact on neuron excitability. Associates with KCNQ2-KCNQ3 channel altering ion selectivity, increasing Na(+) and Cs(+) permeation relative to K(+) permeation. Provides myo-inositol precursor for biosynthesis of phosphoinositides such as PI(4,5)P2, thus indirectly affecting the activity of phosphoinositide-dependent ion channels and Ca(2+) signaling upon osmotic stress. Has very low affinity for sugars such as L-fucose and L-xylose, with an affinity about three orders of magnitude lower than myo-inositol. In Canis lupus familiaris (Dog), this protein is Sodium/myo-inositol cotransporter (SLC5A3).